The chain runs to 406 residues: Tryptophan 2,3-dioxygenase (406 aa).

Residues 72–76 (FIVTH) and R144 contribute to the substrate site. H328 provides a ligand contact to heme. Substrate is bound at residue T342.

Belongs to the tryptophan 2,3-dioxygenase family. In terms of assembly, homotetramer. Dimer of dimers. Heme is required as a cofactor.

The enzyme catalyses L-tryptophan + O2 = N-formyl-L-kynurenine. Its pathway is amino-acid degradation; L-tryptophan degradation via kynurenine pathway; L-kynurenine from L-tryptophan: step 1/2. Heme-dependent dioxygenase that catalyzes the oxidative cleavage of the L-tryptophan (L-Trp) pyrrole ring and converts L-tryptophan to N-formyl-L-kynurenine. Catalyzes the oxidative cleavage of the indole moiety. The chain is Tryptophan 2,3-dioxygenase from Xenopus tropicalis (Western clawed frog).